A 276-amino-acid polypeptide reads, in one-letter code: 2-dehydro-3-deoxyphosphooctonate aldolase (276 aa).

The protein belongs to the KdsA family.

It is found in the cytoplasm. The catalysed reaction is D-arabinose 5-phosphate + phosphoenolpyruvate + H2O = 3-deoxy-alpha-D-manno-2-octulosonate-8-phosphate + phosphate. The protein operates within carbohydrate biosynthesis; 3-deoxy-D-manno-octulosonate biosynthesis; 3-deoxy-D-manno-octulosonate from D-ribulose 5-phosphate: step 2/3. Its pathway is bacterial outer membrane biogenesis; lipopolysaccharide biosynthesis. The chain is 2-dehydro-3-deoxyphosphooctonate aldolase from Helicobacter pylori (strain P12).